The following is a 323-amino-acid chain: NADH-ubiquinone oxidoreductase chain 1 (323 aa).

Helical transmembrane passes span 10-30, 52-72, 84-104, 119-139, 157-177, 189-209, 245-265, 268-288, and 302-322; these read LLYI…GLLI, PNVV…KLVL, IIYA…WSVI, VIFI…AGWA, VSYE…AGTV, VWFI…ALAE, YANI…GIVS, ISGA…RATL, and KSLL…VLII.

This sequence belongs to the complex I subunit 1 family.

Its subcellular location is the mitochondrion inner membrane. It carries out the reaction a ubiquinone + NADH + 5 H(+)(in) = a ubiquinol + NAD(+) + 4 H(+)(out). Its function is as follows. Core subunit of the mitochondrial membrane respiratory chain NADH dehydrogenase (Complex I) that is believed to belong to the minimal assembly required for catalysis. Complex I functions in the transfer of electrons from NADH to the respiratory chain. The immediate electron acceptor for the enzyme is believed to be ubiquinone. This chain is NADH-ubiquinone oxidoreductase chain 1 (nad1), found in Dictyostelium citrinum (Slime mold).